We begin with the raw amino-acid sequence, 226 residues long: DELTA-alicitoxin-Pse1b (226 aa).

An N-terminal signal peptide occupies residues 1-21; the sequence is MRHFVVFLYMFLALSIPTAFA. Positions 22–45 are excised as a propeptide; sequence KKHIVTKKGNHQDITNDNEGENAE. Positions 50 to 59 are plays an important role in the hemolytic activity; the sequence is TVAGAVIAGG. Positions 58-77 are N-terminal region; sequence GGELALKILTKILYEIGKID. S101, V134, S152, P154, Y180, and Y184 together coordinate phosphocholine. The tract at residues 152–167 is trp-rich region, which is important for the binding to lipid membrane; it reads SVPFDYNLYSNWWNVK.

Belongs to the actinoporin family. Sea anemone subfamily. As to quaternary structure, octamer or nonamer in membranes. Monomer in the soluble state.

Its subcellular location is the secreted. It localises to the nematocyst. The protein resides in the target cell membrane. In terms of biological role, pore-forming protein that forms cations-selective hydrophilic pores of around 1 nm and causes cytolysis. Pore formation is a multi-step process that involves specific recognition of membrane sphingomyelin (but neither cholesterol nor phosphatidylcholine) using aromatic rich region and adjacent phosphocholine (POC) binding site, firm binding to the membrane (mainly driven by hydrophobic interactions) accompanied by the transfer of the N-terminal region to the lipid-water interface and finally pore formation after oligomerization of monomers. This Phyllodiscus semoni (Night anemone) protein is DELTA-alicitoxin-Pse1b.